Consider the following 136-residue polypeptide: Serine--glyoxylate aminotransferase (136 aa).

Belongs to the class-V pyridoxal-phosphate-dependent aminotransferase family. Homodimer. Requires pyridoxal 5'-phosphate as cofactor. Expressed in leaves but not in root tissue or seedlings.

Its subcellular location is the peroxisome. It carries out the reaction glyoxylate + L-serine = 3-hydroxypyruvate + glycine. The enzyme catalyses glyoxylate + L-alanine = glycine + pyruvate. Inhibited by aminooxyacetate. The chain is Serine--glyoxylate aminotransferase from Zea mays (Maize).